The chain runs to 390 residues: MGATTMDQKSLWAGVVVLLLLQGGSAYKLVCYFTNWSQDRQEPGKFTPENIDPFLCSHLIYSFASIENNKVIIKDKSEVMLYQTINSLKTKNPKLKILLSIGGYLFGSKGFHPMVDSSTSRLEFINSIILFLRNHNFDGLDVSWIYPDQKENTHFTVLIHELAEAFQKDFTKSTKERLLLTAGVSAGRQMIDNSYQVEKLAKDLDFINLLSFDFHGSWEKPLITGHNSPLSKGWQDRGPSSYYNVEYAVGYWIHKGMPSEKVVMGIPTYGHSFTLASAETTVGAPASGPGAAGPITESSGFLAYYEICQFLKGAKITRLQDQQVPYAVKGNQWVGYDDVKSMETKVQFLKNLNLGGAMIWSIDMDDFTGKSCNQGPYPLVQAVKRSLGSL.

The first 26 residues, 1–26 (MGATTMDQKSLWAGVVVLLLLQGGSA), serve as a signal peptide directing secretion. A GH18 domain is found at 27 to 390 (YKLVCYFTNW…QAVKRSLGSL (364 aa)). A disulfide bridge links Cys-31 with Cys-56. Residue Asn-35 is glycosylated (N-linked (GlcNAc...) asparagine). Residues 75-76 (DK), 102-105 (GGYL), Tyr-104, Tyr-146, 210-213 (LSFD), Asp-213, and Trp-360 contribute to the chitin site.

The protein belongs to the glycosyl hydrolase 18 family. Highest expression in chondrocytes, followed by synoviocytes, lung and heart. Not detected in spleen, pancreas, and liver. May also be expressed in developing brain and placenta.

Its subcellular location is the secreted. Its function is as follows. Lectin that binds chitooligosaccharides and other glycans with high affinity, but not heparin. Has no chitinase activity. The sequence is that of Chitinase-3-like protein 2 (CHI3L2) from Homo sapiens (Human).